The sequence spans 500 residues: MSEEKYIMAIDQGTTSSRAIIFNKKGEKIASSQKEFPQIFPQAGWVEHNANQIWNSVQSVIAGAFIESSIKPGQIEAIGITNQRETTVIWDKKTGLPIYNAIVWQSRQTAPIADQLKEDGYTDLIHEKTGLVIDAYFSATKIRWILDHVPGAQERAEKGELLFGTIDTWLVWKLTDGAAHVTDYSNAARTMLYNIKELKWDEEILKLLNIPKAILPEVKSNSEVYGKTAAFHFYGGEVPISGMAGDQQAALFGQLAFEPGMVKNTYGTGSFIIMNTGEDMQLSENNLLTTIGYGINGKVYYALEGSIFIAGSAIQWLRDGLRMIETSPESEALALASTSDDEIYVVPAFTGLGAPYWNSNARGSVFGLTRGTTKEDFVKATLQSIAYQVRDVIDTMQIDSGIDIQQLRVDGGAAMNNLLMQFQADILGIDIARAKNLETTALGAAFLAGLAVGYWEDLDSLKELNETGQLFKASMNESRKEKLYKGWKKAVMATQIFAEE.

An ADP-binding site is contributed by T14. 3 residues coordinate ATP: T14, T15, and S16. T14 contributes to the sn-glycerol 3-phosphate binding site. R18 provides a ligand contact to ADP. Positions 84, 85, and 136 each coordinate sn-glycerol 3-phosphate. Glycerol is bound by residues R84, E85, and Y136. H232 is modified (phosphohistidine; by HPr). Residue D246 coordinates sn-glycerol 3-phosphate. Glycerol contacts are provided by D246 and Q247. ADP is bound by residues T268 and G311. The ATP site is built by T268, G311, Q315, and G412. G412 and N416 together coordinate ADP.

The protein belongs to the FGGY kinase family. In terms of assembly, homotetramer and homodimer (in equilibrium). The phosphoenolpyruvate-dependent sugar phosphotransferase system (PTS), including enzyme I, and histidine-containing protein (HPr) are required for the phosphorylation, which leads to the activation of the enzyme.

It carries out the reaction glycerol + ATP = sn-glycerol 3-phosphate + ADP + H(+). The protein operates within polyol metabolism; glycerol degradation via glycerol kinase pathway; sn-glycerol 3-phosphate from glycerol: step 1/1. Its activity is regulated as follows. Activated by phosphorylation and inhibited by fructose 1,6-bisphosphate (FBP). In terms of biological role, key enzyme in the regulation of glycerol uptake and metabolism. Catalyzes the phosphorylation of glycerol to yield sn-glycerol 3-phosphate. This chain is Glycerol kinase, found in Streptococcus uberis (strain ATCC BAA-854 / 0140J).